Here is a 683-residue protein sequence, read N- to C-terminus: Glycine--tRNA ligase beta subunit (683 aa).

Belongs to the class-II aminoacyl-tRNA synthetase family. As to quaternary structure, tetramer of two alpha and two beta subunits.

The protein resides in the cytoplasm. It catalyses the reaction tRNA(Gly) + glycine + ATP = glycyl-tRNA(Gly) + AMP + diphosphate. The polypeptide is Glycine--tRNA ligase beta subunit (Pseudomonas putida (strain GB-1)).